A 148-amino-acid polypeptide reads, in one-letter code: UPF0178 protein Mlg_1612 (148 aa).

The protein belongs to the UPF0178 family.

This is UPF0178 protein Mlg_1612 from Alkalilimnicola ehrlichii (strain ATCC BAA-1101 / DSM 17681 / MLHE-1).